An 87-amino-acid polypeptide reads, in one-letter code: Small ribosomal subunit protein eS21 (87 aa).

The protein belongs to the eukaryotic ribosomal protein eS21 family. Component of the small ribosomal subunit. Mature ribosomes consist of a small (40S) and a large (60S) subunit. The 40S subunit contains about 33 different proteins and 1 molecule of RNA (18S). The 60S subunit contains about 49 different proteins and 3 molecules of RNA (25S, 5.8S and 5S).

The protein resides in the cytoplasm. Required for the processing of the 20S rRNA-precursor to mature 18S rRNA in a late step of the maturation of 40S ribosomal subunits. Has a physiological role leading to 18S rRNA stability. This Candida glabrata (strain ATCC 2001 / BCRC 20586 / JCM 3761 / NBRC 0622 / NRRL Y-65 / CBS 138) (Yeast) protein is Small ribosomal subunit protein eS21 (RPS21).